Here is a 418-residue protein sequence, read N- to C-terminus: Alpha-1-antitrypsin (418 aa).

The first 24 residues, 1-24, serve as a signal peptide directing secretion; that stretch reads MPSSVSWGILLLAGLCCLVPVSLA. Serine 38 carries the phosphoserine modification. Asparagine 70, asparagine 107, and asparagine 271 each carry an N-linked (GlcNAc...) asparagine glycan. The interval 373–392 is RCL; it reads GAMFLEAIPMSIPPEVKFNK. The residue at position 383 (serine 383) is a Phosphoserine.

Belongs to the serpin family. In terms of assembly, interacts with CELA2A. Interacts with ERGIC3 and LMAN1/ERGIC53. Interacts with PRSS1/Trypsin. Plasma.

It is found in the secreted. Inhibitor of serine proteases. Its primary target is elastase, but it also has a moderate affinity for plasmin and thrombin. Inhibits trypsin, chymotrypsin and plasminogen activator. The polypeptide is Alpha-1-antitrypsin (SERPINA1) (Pongo abelii (Sumatran orangutan)).